The chain runs to 610 residues: Pentatricopeptide repeat-containing protein At5g40400 (610 aa).

12 PPR repeats span residues aspartate 165 to valine 199, serine 200 to proline 234, asparagine 235 to proline 269, aspartate 270 to proline 304, aspartate 305 to proline 339, aspartate 340 to proline 374, aspartate 375 to isoleucine 409, proline 410 to alanine 445, lysine 446 to leucine 480, aspartate 481 to proline 515, aspartate 516 to glutamate 546, and aspartate 551 to proline 586.

This sequence belongs to the PPR family. P subfamily.

The protein is Pentatricopeptide repeat-containing protein At5g40400 of Arabidopsis thaliana (Mouse-ear cress).